The following is a 140-amino-acid chain: Large ribosomal subunit protein uL14 (140 aa).

Belongs to the universal ribosomal protein uL14 family.

This chain is Large ribosomal subunit protein uL14 (RPL23), found in Nicotiana tabacum (Common tobacco).